Consider the following 368-residue polypeptide: D-amino-acid oxidase (368 aa).

FAD-binding residues include Ala11, Ser14, Lys35, His36, Cys46, Ser47, Gly51, Asn53, and Phe174. The cysteines at positions 230 and 285 are disulfide-linked. Residues Tyr244, Tyr260, and Arg308 each contribute to the (R)-lactate site. Tyr244, Tyr260, and Arg308 together coordinate anthranilate. Arg308, Gly334, Gly337, Tyr338, and Gln339 together coordinate FAD. Positions Ala366 to Leu368 match the Microbody targeting signal motif.

Belongs to the DAMOX/DASOX family. Homotetramer. The cofactor is FAD. Post-translationally, the disulfide bond might contribute to the high thermal stability of the protein.

The protein localises to the peroxisome matrix. It carries out the reaction a D-alpha-amino acid + O2 + H2O = a 2-oxocarboxylate + H2O2 + NH4(+). The enzyme catalyses D-alanine + O2 + H2O = pyruvate + H2O2 + NH4(+). The catalysed reaction is D-glutamate + O2 + H2O = H2O2 + 2-oxoglutarate + NH4(+). It catalyses the reaction D-serine + O2 + H2O = 3-hydroxypyruvate + H2O2 + NH4(+). It carries out the reaction D-phenylalanine + O2 + H2O = 3-phenylpyruvate + H2O2 + NH4(+). The enzyme catalyses D-arginine + O2 + H2O = 5-guanidino-2-oxopentanoate + H2O2 + NH4(+). The catalysed reaction is D-methionine + O2 + H2O = 4-methylsulfanyl-2-oxobutanoate + H2O2 + NH4(+). It catalyses the reaction D-leucine + O2 + H2O = 4-methyl-2-oxopentanoate + H2O2 + NH4(+). It carries out the reaction D-lysine + O2 + H2O = 6-amino-2-oxohexanoate + H2O2 + NH4(+). The enzyme catalyses D-valine + O2 + H2O = 3-methyl-2-oxobutanoate + H2O2 + NH4(+). The catalysed reaction is D-histidine + O2 + H2O = 3-(imidazol-5-yl)pyruvate + H2O2 + NH4(+). It catalyses the reaction D-glutamine + O2 + H2O = 2-oxoglutaramate + H2O2 + NH4(+). It carries out the reaction D-isoleucine + O2 + H2O = (R)-3-methyl-2-oxopentanoate + H2O2 + NH4(+). The enzyme catalyses D-allo-isoleucine + O2 + H2O = (S)-3-methyl-2-oxopentanoate + H2O2 + NH4(+). The catalysed reaction is D-threonine + O2 + H2O = (S)-3-hydroxy-2-oxobutanoate + H2O2 + NH4(+). It catalyses the reaction D-asparagine + O2 + H2O = 2-oxosuccinamate + H2O2 + NH4(+). It carries out the reaction D-tryptophan + O2 + H2O = indole-3-pyruvate + H2O2 + NH4(+). The enzyme catalyses D-tyrosine + O2 + H2O = 3-(4-hydroxyphenyl)pyruvate + H2O2 + NH4(+). With respect to regulation, partially inhibited by benzoate, crotonate, and D-malate. Functionally, catalyzes the oxidative deamination of D-amino acids with broad substrate specificity. Enables the organism to utilize D-amino acids as a source of nutrients. Unusually, has high activity on D-glutamate. This is D-amino-acid oxidase from Talaromyces emersonii (Thermophilic fungus).